The primary structure comprises 338 residues: Holliday junction branch migration complex subunit RuvB (338 aa).

Positions 4-185 (EDQKILDAKP…FGIVAHMQFY (182 aa)) are large ATPase domain (RuvB-L). Residues leucine 24, arginine 25, glycine 66, lysine 69, threonine 70, threonine 71, 132 to 134 (EDF), arginine 175, tyrosine 185, and arginine 222 contribute to the ATP site. Threonine 70 contacts Mg(2+). Residues 186–256 (PVSDLKLIAK…IVDNALNKLH (71 aa)) form a small ATPAse domain (RuvB-S) region. The tract at residues 259 to 338 (ARGLDETDLK…LQIPYQTGLS (80 aa)) is head domain (RuvB-H). Residues arginine 314 and arginine 319 each coordinate DNA.

This sequence belongs to the RuvB family. Homohexamer. Forms an RuvA(8)-RuvB(12)-Holliday junction (HJ) complex. HJ DNA is sandwiched between 2 RuvA tetramers; dsDNA enters through RuvA and exits via RuvB. An RuvB hexamer assembles on each DNA strand where it exits the tetramer. Each RuvB hexamer is contacted by two RuvA subunits (via domain III) on 2 adjacent RuvB subunits; this complex drives branch migration. In the full resolvosome a probable DNA-RuvA(4)-RuvB(12)-RuvC(2) complex forms which resolves the HJ.

It is found in the cytoplasm. The catalysed reaction is ATP + H2O = ADP + phosphate + H(+). The RuvA-RuvB-RuvC complex processes Holliday junction (HJ) DNA during genetic recombination and DNA repair, while the RuvA-RuvB complex plays an important role in the rescue of blocked DNA replication forks via replication fork reversal (RFR). RuvA specifically binds to HJ cruciform DNA, conferring on it an open structure. The RuvB hexamer acts as an ATP-dependent pump, pulling dsDNA into and through the RuvAB complex. RuvB forms 2 homohexamers on either side of HJ DNA bound by 1 or 2 RuvA tetramers; 4 subunits per hexamer contact DNA at a time. Coordinated motions by a converter formed by DNA-disengaged RuvB subunits stimulates ATP hydrolysis and nucleotide exchange. Immobilization of the converter enables RuvB to convert the ATP-contained energy into a lever motion, pulling 2 nucleotides of DNA out of the RuvA tetramer per ATP hydrolyzed, thus driving DNA branch migration. The RuvB motors rotate together with the DNA substrate, which together with the progressing nucleotide cycle form the mechanistic basis for DNA recombination by continuous HJ branch migration. Branch migration allows RuvC to scan DNA until it finds its consensus sequence, where it cleaves and resolves cruciform DNA. The polypeptide is Holliday junction branch migration complex subunit RuvB (Oenococcus oeni (strain ATCC BAA-331 / PSU-1)).